A 541-amino-acid polypeptide reads, in one-letter code: Cytosolic phospholipase A2 gamma (541 aa).

Residues 1 to 541 form the PLA2c domain; that stretch reads MGSSEVSIIP…KDSARSCCLA (541 aa). Catalysis depends on serine 82, which acts as the Nucleophile. A required for lipid droplet localization region spans residues 260 to 292; that stretch reads LTLKGLWRRAVANAKSIGHLIFARLLRLQESSQ. Serine 337 carries the post-translational modification Phosphoserine. Catalysis depends on aspartate 385, which acts as the Proton acceptor. Position 538 is a cysteine methyl ester (cysteine 538). Cysteine 538 carries the S-farnesyl cysteine lipid modification. The propeptide at 539-541 is removed in mature form; that stretch reads CLA.

As to quaternary structure, (Microbial infection) Interacts with HCV non-structural protein 4B/NS4B; this interaction likely initiates the recruitment of replication complexes to lipid droplets. As to expression, highly expressed in heart and skeletal muscle.

The protein resides in the cell membrane. It localises to the endoplasmic reticulum membrane. The protein localises to the mitochondrion membrane. It is found in the lipid droplet. It catalyses the reaction a 1,2-diacyl-sn-glycero-3-phosphocholine + H2O = a 1-acyl-sn-glycero-3-phosphocholine + a fatty acid + H(+). The catalysed reaction is a 1-O-alkyl-2-acyl-sn-glycero-3-phosphocholine + H2O = a 1-O-alkyl-sn-glycero-3-phosphocholine + a fatty acid + H(+). It carries out the reaction 1,2-dihexadecanoyl-sn-glycero-3-phosphocholine + H2O = 1-hexadecanoyl-sn-glycero-3-phosphocholine + hexadecanoate + H(+). The enzyme catalyses 1-hexadecanoyl-2-(9Z-octadecenoyl)-sn-glycero-3-phosphocholine + H2O = 1-hexadecanoyl-sn-glycero-3-phosphocholine + (9Z)-octadecenoate + H(+). It catalyses the reaction 1-hexadecanoyl-2-(9Z,12Z-octadecadienoyl)-sn-glycero-3-phosphocholine + H2O = (9Z,12Z)-octadecadienoate + 1-hexadecanoyl-sn-glycero-3-phosphocholine + H(+). The catalysed reaction is 1-hexadecanoyl-2-(5Z,8Z,11Z,14Z-eicosatetraenoyl)-sn-glycero-3-phosphocholine + H2O = 1-hexadecanoyl-sn-glycero-3-phosphocholine + (5Z,8Z,11Z,14Z)-eicosatetraenoate + H(+). It carries out the reaction 1-O-hexadecyl-2-(5Z,8Z,11Z,14Z)-eicosatetraenoyl-sn-glycero-3-phosphocholine + H2O = 1-O-hexadecyl-sn-glycero-3-phosphocholine + (5Z,8Z,11Z,14Z)-eicosatetraenoate + H(+). The enzyme catalyses 1-hexadecanoyl-2-(5Z,8Z,11Z,14Z-eicosatetraenoyl)-sn-glycero-3-phosphocholine + H2O = 2-(5Z,8Z,11Z,14Z)-eicosatetraenoyl-sn-glycero-3-phosphocholine + hexadecanoate + H(+). It catalyses the reaction a 1-acyl-sn-glycero-3-phosphocholine + H2O = sn-glycerol 3-phosphocholine + a fatty acid + H(+). The catalysed reaction is 1-hexadecanoyl-sn-glycero-3-phosphocholine + H2O = sn-glycerol 3-phosphocholine + hexadecanoate + H(+). It carries out the reaction 2 1-hexadecanoyl-sn-glycero-3-phosphocholine = 1,2-dihexadecanoyl-sn-glycero-3-phosphocholine + sn-glycerol 3-phosphocholine. The enzyme catalyses 1-hexadecanoyl-sn-glycero-3-phosphoethanolamine + 1-hexadecanoyl-sn-glycero-3-phosphocholine = 1,2-dihexadecanoyl-sn-glycero-3-phosphoethanolamine + sn-glycerol 3-phosphocholine. It catalyses the reaction 1-hexadecanoyl-sn-glycero-3-phosphoethanolamine + 1-hexadecanoyl-sn-glycero-3-phosphocholine = sn-glycero-3-phosphoethanolamine + 1,2-dihexadecanoyl-sn-glycero-3-phosphocholine. The catalysed reaction is 2 1-hexadecanoyl-sn-glycero-3-phosphoethanolamine = 1,2-dihexadecanoyl-sn-glycero-3-phosphoethanolamine + sn-glycero-3-phosphoethanolamine. It carries out the reaction 1-O-hexadecyl-sn-glycero-3-phosphocholine + 1-hexadecanoyl-sn-glycero-3-phosphocholine = 1-O-hexadecyl-2-hexadecanoyl-sn-glycero-3-phosphocholine + sn-glycerol 3-phosphocholine. The enzyme catalyses a 1-O-(1Z-alkenyl)-sn-glycero-3-phosphoethanolamine + 1-hexadecanoyl-sn-glycero-3-phosphocholine = 1-O-(1Z)-alkenyl-2-hexadecanoyl-sn-glycero-3-phosphoethanolamine + sn-glycerol 3-phosphocholine. It catalyses the reaction 1-O-hexadecyl-sn-glycero-3-phosphocholine + 1-hexadecanoyl-sn-glycero-3-phosphoethanolamine = 1-O-hexadecyl-2-hexadecanoyl-sn-glycero-3-phosphocholine + sn-glycero-3-phosphoethanolamine. The catalysed reaction is 1-octadecanoyl-2-(5Z,8Z,11Z,14Z)-eicosatetraenoyl-sn-glycero-3-phosphoethanolamine + 1-hexadecanoyl-sn-glycero-3-phosphocholine = 1-octadecanoyl-sn-glycero-3-phosphoethanolamine + 1-hexadecanoyl-2-(5Z,8Z,11Z,14Z-eicosatetraenoyl)-sn-glycero-3-phosphocholine. It carries out the reaction 1-octadecanoyl-2-(5Z,8Z,11Z,14Z)-eicosatetraenoyl-sn-glycero-3-phosphoethanolamine + 1-O-hexadecyl-sn-glycero-3-phosphocholine = 1-octadecanoyl-sn-glycero-3-phosphoethanolamine + 1-O-hexadecyl-2-(5Z,8Z,11Z,14Z)-eicosatetraenoyl-sn-glycero-3-phosphocholine. The enzyme catalyses 1-hexadecanoyl-2-(9Z,12Z-octadecadienoyl)-sn-glycero-3-phosphocholine + a 1-O-(1Z-alkenyl)-sn-glycero-3-phosphoethanolamine = 1-O-(1Z-alkenyl)-2-(9Z,12Z-octadecadienoyl)-sn-glycero-3-phosphoethanolamine + 1-hexadecanoyl-sn-glycero-3-phosphocholine. It catalyses the reaction 1-hexadecanoyl-2-(5Z,8Z,11Z,14Z-eicosatetraenoyl)-sn-glycero-3-phosphocholine + a 1-O-(1Z-alkenyl)-sn-glycero-3-phosphoethanolamine = 1-O-(1Z)-alkenyl-2-(5Z,8Z,11Z,14Z)-eicosatetraenoyl-sn-glycero-3-phosphoethanolamine + 1-hexadecanoyl-sn-glycero-3-phosphocholine. Not regulated by calcium, coenzyme A or ATP. Lysophospholipase activity is inhibited by palmitoyl-CoA. Lysophospholipase and O-acyltransferase activities are inhibited by methylarachidonoylfluorophosphonate. Lysophospholipase activity is inhibited by phosphatidate or lysophosphatidate. O-acyltransferase activity is up-regulated at low concentration (10-20 uM) of phosphatidate or lysophosphatidate, but inhibited at higher concentrations. Calcium-independent phospholipase, lysophospholipase and O-acyltransferase involved in phospholipid remodeling with implications in endoplasmic reticulum membrane homeostasis and lipid droplet biogenesis. Preferentially hydrolyzes the ester bond of the fatty acyl group attached at the sn-2 position of phospholipids with choline and ethanolamine head groups, producing lysophospholipids that are used in deacylation-reacylation cycles. Transfers the sn-1 fatty acyl from one lysophospholipid molecule to the sn-2 position of another lysophospholipid to form diacyl, alkylacyl and alkenylacyl glycerophospholipids. Cleaves ester bonds but not alkyl or alkenyl ether bonds at sn-1 position of lysophospholipids. Catalyzes sn-2 fatty acyl transfer from phospholipids to the sn-2 position of 1-O-alkyl or 1-O-alkenyl lysophospholipids with lower efficiency. In response to dietary fatty acids, may play a role in the formation of nascent lipid droplets from the endoplasmic reticulum likely by regulating the phospholipid composition of these organelles. Its function is as follows. (Microbial infection) May play a role in replication and assembly of human hepatitis C virus (HCV). In response to HCV infection, promotes remodeling of host endoplasmic reticulum membranes to form organelle-like structures called membranous web, where HCV replication occur. Can further mediate translocation of replication complexes to lipid droplets to enable virion assembly. Functionally, (Microbial infection) May facilitate human T-lymphotropic virus type 1 (HTLV-1) infection by promoting leukotriene B4 (LTB4) biosynthesis. LTB4 acts as a chemoattractant for HTLV-1-infected CD4-positive T cells and favors cell to cell viral transmission. In Homo sapiens (Human), this protein is Cytosolic phospholipase A2 gamma (PLA2G4C).